A 346-amino-acid chain; its full sequence is tRNA N6-adenosine threonylcarbamoyltransferase (346 aa).

2 residues coordinate Fe cation: H117 and H121. Residues 139 to 143, D172, G185, D189, and N278 contribute to the substrate site; that span reads VVSGG. D307 serves as a coordination point for Fe cation.

Belongs to the KAE1 / TsaD family. In terms of assembly, may form a heterodimer with TsaB. The cofactor is Fe(2+).

It localises to the cytoplasm. It catalyses the reaction L-threonylcarbamoyladenylate + adenosine(37) in tRNA = N(6)-L-threonylcarbamoyladenosine(37) in tRNA + AMP + H(+). Functionally, required for the formation of a threonylcarbamoyl group on adenosine at position 37 (t(6)A37) in tRNAs that read codons beginning with adenine. Is involved in the transfer of the threonylcarbamoyl moiety of threonylcarbamoyl-AMP (TC-AMP) to the N6 group of A37, together with TsaE and TsaB; this reaction does not require ATP in vitro. TsaD likely plays a direct catalytic role in this reaction. The polypeptide is tRNA N6-adenosine threonylcarbamoyltransferase (Bacillus subtilis (strain 168)).